Here is a 163-residue protein sequence, read N- to C-terminus: NADH-quinone oxidoreductase subunit I (163 aa).

4Fe-4S ferredoxin-type domains follow at residues 53 to 83 (LRRYPNGEERCIACKLCEAICPAQAITIEAG) and 94 to 123 (VRYDIDMVKCIYCGFCQEACPVEAIVEGPN). Positions 63, 66, 69, 73, 103, 106, 109, and 113 each coordinate [4Fe-4S] cluster.

Belongs to the complex I 23 kDa subunit family. As to quaternary structure, NDH-1 is composed of 14 different subunits. Subunits NuoA, H, J, K, L, M, N constitute the membrane sector of the complex. It depends on [4Fe-4S] cluster as a cofactor.

The protein resides in the cell inner membrane. It carries out the reaction a quinone + NADH + 5 H(+)(in) = a quinol + NAD(+) + 4 H(+)(out). Functionally, NDH-1 shuttles electrons from NADH, via FMN and iron-sulfur (Fe-S) centers, to quinones in the respiratory chain. The immediate electron acceptor for the enzyme in this species is believed to be ubiquinone. Couples the redox reaction to proton translocation (for every two electrons transferred, four hydrogen ions are translocated across the cytoplasmic membrane), and thus conserves the redox energy in a proton gradient. In Bartonella henselae (strain ATCC 49882 / DSM 28221 / CCUG 30454 / Houston 1) (Rochalimaea henselae), this protein is NADH-quinone oxidoreductase subunit I.